The sequence spans 412 residues: Multifunctional CCA protein (412 aa).

Positions 8 and 11 each coordinate ATP. CTP is bound by residues glycine 8 and arginine 11. Residues aspartate 21 and aspartate 23 each contribute to the Mg(2+) site. Positions 91, 137, and 140 each coordinate ATP. Positions 91, 137, and 140 each coordinate CTP. The HD domain occupies 228-329 (TGIHTLMTLS…VKLFDSIDAW (102 aa)).

It belongs to the tRNA nucleotidyltransferase/poly(A) polymerase family. Bacterial CCA-adding enzyme type 1 subfamily. As to quaternary structure, monomer. Can also form homodimers and oligomers. Mg(2+) serves as cofactor. Requires Ni(2+) as cofactor.

The enzyme catalyses a tRNA precursor + 2 CTP + ATP = a tRNA with a 3' CCA end + 3 diphosphate. The catalysed reaction is a tRNA with a 3' CCA end + 2 CTP + ATP = a tRNA with a 3' CCACCA end + 3 diphosphate. Catalyzes the addition and repair of the essential 3'-terminal CCA sequence in tRNAs without using a nucleic acid template. Adds these three nucleotides in the order of C, C, and A to the tRNA nucleotide-73, using CTP and ATP as substrates and producing inorganic pyrophosphate. tRNA 3'-terminal CCA addition is required both for tRNA processing and repair. Also involved in tRNA surveillance by mediating tandem CCA addition to generate a CCACCA at the 3' terminus of unstable tRNAs. While stable tRNAs receive only 3'-terminal CCA, unstable tRNAs are marked with CCACCA and rapidly degraded. The chain is Multifunctional CCA protein from Escherichia coli O127:H6 (strain E2348/69 / EPEC).